A 122-amino-acid chain; its full sequence is Small ribosomal subunit protein uS13 (122 aa).

The interval 97 to 122 is disordered; the sequence is PVRGQRTHTNARTRKGPAKAIAGKKK.

It belongs to the universal ribosomal protein uS13 family. Part of the 30S ribosomal subunit. Forms a loose heterodimer with protein S19. Forms two bridges to the 50S subunit in the 70S ribosome.

Functionally, located at the top of the head of the 30S subunit, it contacts several helices of the 16S rRNA. In the 70S ribosome it contacts the 23S rRNA (bridge B1a) and protein L5 of the 50S subunit (bridge B1b), connecting the 2 subunits; these bridges are implicated in subunit movement. Contacts the tRNAs in the A and P-sites. In Brucella abortus (strain S19), this protein is Small ribosomal subunit protein uS13.